The following is a 434-amino-acid chain: D-amino acid dehydrogenase (434 aa).

3-17 (VLVLGSGVIGTTSAW) provides a ligand contact to FAD.

The protein belongs to the DadA oxidoreductase family. It depends on FAD as a cofactor.

It catalyses the reaction a D-alpha-amino acid + A + H2O = a 2-oxocarboxylate + AH2 + NH4(+). Its pathway is amino-acid degradation; D-alanine degradation; NH(3) and pyruvate from D-alanine: step 1/1. Its function is as follows. Oxidative deamination of D-amino acids. The protein is D-amino acid dehydrogenase of Stenotrophomonas maltophilia (strain K279a).